The sequence spans 496 residues: Catalase-A (496 aa).

Residues His-54 and Asn-128 contribute to the active site. Tyr-338 is a binding site for heme. The short motif at 494–496 (SNL) is the Microbody targeting signal element.

This sequence belongs to the catalase family. Requires heme as cofactor.

Its subcellular location is the peroxisome matrix. The catalysed reaction is 2 H2O2 = O2 + 2 H2O. Its function is as follows. Catalyzes the degradation of hydrogen peroxide (H(2)O(2)) generated by peroxisomal oxidases to water and oxygen, thereby protecting cells from the toxic effects of hydrogen peroxide. The protein is Catalase-A (catA) of Dictyostelium discoideum (Social amoeba).